A 252-amino-acid chain; its full sequence is Serine/threonine phosphatase stp (252 aa).

Residues 1–18 (MHAEFRTDRGRIRHHNED) show a composition bias toward basic and acidic residues. A disordered region spans residues 1-23 (MHAEFRTDRGRIRHHNEDNGGVF). Residues 2-242 (HAEFRTDRGR…DNITVLLVER (241 aa)) enclose the PPM-type phosphatase domain. Residues Asp-36, Gly-37, Asp-194, and Asp-233 each coordinate Mn(2+).

The protein belongs to the PP2C family. Mn(2+) serves as cofactor.

It is found in the cytoplasm. The protein localises to the membrane. It catalyses the reaction O-phospho-L-seryl-[protein] + H2O = L-seryl-[protein] + phosphate. The enzyme catalyses O-phospho-L-threonyl-[protein] + H2O = L-threonyl-[protein] + phosphate. Its function is as follows. Protein phosphatase that dephosphorylates EF-Tu. The polypeptide is Serine/threonine phosphatase stp (stp) (Listeria monocytogenes serotype 4b (strain F2365)).